Reading from the N-terminus, the 593-residue chain is Thiol:disulfide interchange protein DsbD (593 aa).

A signal peptide spans 1-21 (MRALLTFFVAGLLVLSSPAMA). Disulfide bonds link Cys130/Cys136 and Cys207/Cys328. The next 8 helical transmembrane spans lie at 193–215 (LLFLALGVGLAFTPCVLPMYPIL), 235–257 (LVYVQGMALTYTLLGLVVASAGL), 269–291 (LIGLSILFVTLALSMFGVYTLQL), 318–340 (GAISGLVCSPCTTAPLSGALLYV), 347–369 (LTGGVALYALAMGMGIPLILVAV), 384–401 (RVKTLFGFVLLAAPIFLL), 408–425 (MWSTALWSALGIAAFGWL), and 440–462 (SAVGIIAVLGLFASAQPALNYWF). Positions 451-593 (FASAQPALNY…FLEHIQRISN (143 aa)) constitute a Thioredoxin domain. A disulfide bridge links Cys508 with Cys511.

The protein belongs to the thioredoxin family. DsbD subfamily.

Its subcellular location is the cell inner membrane. It carries out the reaction [protein]-dithiol + NAD(+) = [protein]-disulfide + NADH + H(+). The catalysed reaction is [protein]-dithiol + NADP(+) = [protein]-disulfide + NADPH + H(+). Functionally, required to facilitate the formation of correct disulfide bonds in some periplasmic proteins and for the assembly of the periplasmic c-type cytochromes. Acts by transferring electrons from cytoplasmic thioredoxin to the periplasm. This transfer involves a cascade of disulfide bond formation and reduction steps. The polypeptide is Thiol:disulfide interchange protein DsbD (Vibrio vulnificus (strain CMCP6)).